We begin with the raw amino-acid sequence, 80 residues long: Cell division activator CedA (80 aa).

This sequence belongs to the CedA family.

In terms of biological role, activates the cell division inhibited by chromosomal DNA over-replication. The polypeptide is Cell division activator CedA (Escherichia coli (strain SMS-3-5 / SECEC)).